Consider the following 368-residue polypeptide: D-alanine--D-alanine ligase (368 aa).

One can recognise an ATP-grasp domain in the interval 151–358; sequence KKLLAAEGLP…YGTLVSTLVD (208 aa). ATP is bound at residue 179–234; the sequence is KSRLHLPVFVKPARGGSSIGITRVAEWAALDDAIAHARLHDPKVIVESGIIGREVE. Mg(2+) is bound by residues Asp313, Glu325, and Asn327.

The protein belongs to the D-alanine--D-alanine ligase family. Mg(2+) is required as a cofactor. It depends on Mn(2+) as a cofactor.

It is found in the cytoplasm. The catalysed reaction is 2 D-alanine + ATP = D-alanyl-D-alanine + ADP + phosphate + H(+). The protein operates within cell wall biogenesis; peptidoglycan biosynthesis. In terms of biological role, cell wall formation. In Rhodococcus jostii (strain RHA1), this protein is D-alanine--D-alanine ligase.